The sequence spans 265 residues: Methyl-coenzyme M reductase II subunit gamma (265 aa).

Arg123 contributes to the coenzyme M binding site.

It belongs to the methyl-coenzyme M reductase gamma subunit family. MCR is a hexamer of two alpha, two beta, and two gamma chains, forming a dimer of heterotrimers. The cofactor is coenzyme F430.

The catalysed reaction is coenzyme B + methyl-coenzyme M = methane + coenzyme M-coenzyme B heterodisulfide. It functions in the pathway one-carbon metabolism; methyl-coenzyme M reduction; methane from methyl-coenzyme M: step 1/1. In terms of biological role, component of the methyl-coenzyme M reductase (MCR) I that catalyzes the reductive cleavage of methyl-coenzyme M (CoM-S-CH3 or 2-(methylthio)ethanesulfonate) using coenzyme B (CoB or 7-mercaptoheptanoylthreonine phosphate) as reductant which results in the production of methane and the mixed heterodisulfide of CoB and CoM (CoM-S-S-CoB). This is the final step in methanogenesis. The chain is Methyl-coenzyme M reductase II subunit gamma (mrtG) from Methanothermobacter marburgensis (strain ATCC BAA-927 / DSM 2133 / JCM 14651 / NBRC 100331 / OCM 82 / Marburg) (Methanobacterium thermoautotrophicum).